The sequence spans 160 residues: Cytochrome b6-f complex subunit 4 (160 aa).

Transmembrane regions (helical) follow at residues 36-56 (LLYIFPVVILGTIACTVGLAV), 95-115 (LLGVLLMAAVPAGLLTVPFLE), and 131-151 (TVFLIGTVVALWLGIGAALPI).

This sequence belongs to the cytochrome b family. PetD subfamily. As to quaternary structure, the 4 large subunits of the cytochrome b6-f complex are cytochrome b6, subunit IV (17 kDa polypeptide, petD), cytochrome f and the Rieske protein, while the 4 small subunits are petG, petL, petM and petN. The complex functions as a dimer.

The protein localises to the plastid. Its subcellular location is the chloroplast thylakoid membrane. Component of the cytochrome b6-f complex, which mediates electron transfer between photosystem II (PSII) and photosystem I (PSI), cyclic electron flow around PSI, and state transitions. The chain is Cytochrome b6-f complex subunit 4 from Marchantia polymorpha (Common liverwort).